The primary structure comprises 376 residues: Calcium uniporter protein, mitochondrial (376 aa).

The N-terminal 34 residues, 1–34, are a transit peptide targeting the mitochondrion; that stretch reads MAAKVCRSVLLLSRSSGAVASSAYPAFGVSSQRH. At 35 to 257 the chain is on the mitochondrial matrix side; sequence QGTKTEALSM…LSKKAERRTT (223 aa). Residues 99-189 are N-terminal MCU domain; that stretch reads VSVVYQNGLP…TSYLVQPPRR (91 aa). The stretch at 213-254 forms a coiled coil; the sequence is TLRIEEHQLNKERELIGRLEDLNSQLQPLEKVKEELSKKAER. Residues 258–280 form a helical membrane-spanning segment; sequence WVLWGGMAYMATQFGILARLTWW. Residues 281-289 lie on the Mitochondrial intermembrane side of the membrane; the sequence is EYSWDIMEP. A Selectivity filter motif is present at residues 284-292; sequence WDIMEPVTY. E288 provides a ligand contact to Ca(2+). The chain crosses the membrane as a helical span at residues 290–309; sequence VTYFITYGTAMAMYAYFVLT. The juxtamembrane helix stretch occupies residues 309–314; the sequence is TRQEYL. Residues 310–376 are Mitochondrial matrix-facing; sequence RQEYLYPDAR…PIQQIDTSKD (67 aa). Residues 336 to 363 adopt a coiled-coil conformation; the sequence is FDIEKYNKLKDAIAEAELDLKRLRDPLQ.

Belongs to the MCU (TC 1.A.77) family. In terms of assembly, homotetramer. Component of the uniplex complex.

Its subcellular location is the mitochondrion inner membrane. The enzyme catalyses Ca(2+)(in) = Ca(2+)(out). With respect to regulation, MCU channel activity is regulated by the heterodimer composed of micu1 and micu2, which act as calcium-sensors. At low calcium levels, micu1 occludes the pore of the MCU channel, preventing mitochondrial calcium uptake. At higher calcium levels, calcium-binding to micu1 and micu2 induces a conformational change that weakens mcu-micu1 interactions and moves the micu1-micu2 heterodimer away from the pore, allowing calcium permeation through the channel. MCU channel activity is gated by emre/smdt1 via the juxtamembrane helix loop. Inhibited by ruthenium red or its derivative Ru360. Its function is as follows. Channel-forming and calcium-conducting subunit of the mitochondrial inner membrane calcium uniporter complex (uniplex), which mediates calcium uptake into the mitochondrial matrix. Mcu channel activity is regulated by the calcium-sensor subunits of the uniplex micu1 and micu2. Mitochondrial calcium homeostasis plays key roles in cellular physiology and regulates ATP production, cytoplasmic calcium signals and activation of cell death pathways. Involved in buffering the amplitude of systolic calcium rises in cardiomyocytes. While dispensable for baseline homeostatic cardiac function, acts as a key regulator of short-term mitochondrial calcium loading underlying a 'fight-or-flight' response during acute stress: acts by mediating a rapid increase of mitochondrial calcium in pacemaker cells. Mitochondrial calcium uptake in skeletal muscle cells is involved in muscle size in adults. In Danio rerio (Zebrafish), this protein is Calcium uniporter protein, mitochondrial.